A 690-amino-acid polypeptide reads, in one-letter code: Beta-galactosidase (690 aa).

Substrate is bound at residue Asn-173. Glu-174 acts as the Proton donor in catalysis. Trp-345 serves as a coordination point for substrate.

Belongs to the glycosyl hydrolase 42 family.

It carries out the reaction Hydrolysis of terminal non-reducing beta-D-galactose residues in beta-D-galactosides.. With respect to regulation, activity stimulated by beta-mercaptoethanol. Functionally, highly specific towards beta-D-galactoside substrates. Hydrolyzes 5-bromo-4-chloro-3-indolyl-beta-D-galactopyranoside (X-Gal) and o-nitrophenyl-beta-D-galactopyranoside (ONPG). Has activity against p-nitrophenyl(pNP)-beta-D-galactoside, but not significantly at all towards pNP-alpha-D-galactoside, pNP-beta-D-glucoside, pNP-beta-D-mannoside, pNP-beta-L-fucoside, pNP-beta-D-xyloside, pNP-beta-L-arabinoside, pNP-beta-D-galuronide, pNP-beta-D-glucuronide, pNP-beta-D-lactoside or pNP-beta-D-cellobioside. In Arthrobacter sp, this protein is Beta-galactosidase.